We begin with the raw amino-acid sequence, 293 residues long: Neugrin (293 aa).

A signal peptide spans 1–15 (MALSLSLFLGGRVRA). Disordered stretches follow at residues 25 to 48 (QGVAGPGSISREPDPDSDWEPEER) and 162 to 211 (PLSA…EKNK). Ser-41 carries the post-translational modification Phosphoserine. An N-linked (GlcNAc...) asparagine glycan is attached at Asn-270.

Belongs to the neugrin family. Forms a regulatory protein-RNA complex, consisting of RCC1L, NGRN, RPUSD3, RPUSD4, TRUB2, FASTKD2 and 16S mt-rRNA. Interacts with 16S mt-rRNA; this interaction is direct.

It is found in the nucleus. It localises to the secreted. The protein resides in the mitochondrion membrane. In terms of biological role, plays an essential role in mitochondrial ribosome biogenesis. As a component of a functional protein-RNA module, consisting of RCC1L, NGRN, RPUSD3, RPUSD4, TRUB2, FASTKD2 and 16S mitochondrial ribosomal RNA (16S mt-rRNA), controls 16S mt-rRNA abundance and is required for intra-mitochondrial translation of core subunits of the oxidative phosphorylation system. The chain is Neugrin (Ngrn) from Rattus norvegicus (Rat).